Reading from the N-terminus, the 445-residue chain is Exodeoxyribonuclease 7 large subunit (445 aa).

This sequence belongs to the XseA family. Heterooligomer composed of large and small subunits.

The protein resides in the cytoplasm. The enzyme catalyses Exonucleolytic cleavage in either 5'- to 3'- or 3'- to 5'-direction to yield nucleoside 5'-phosphates.. Its function is as follows. Bidirectionally degrades single-stranded DNA into large acid-insoluble oligonucleotides, which are then degraded further into small acid-soluble oligonucleotides. This is Exodeoxyribonuclease 7 large subunit from Staphylococcus aureus (strain JH1).